The chain runs to 280 residues: Large ribosomal subunit protein uL2 (280 aa).

The tract at residues D229–K280 is disordered.

It belongs to the universal ribosomal protein uL2 family. Part of the 50S ribosomal subunit. Forms a bridge to the 30S subunit in the 70S ribosome.

Functionally, one of the primary rRNA binding proteins. Required for association of the 30S and 50S subunits to form the 70S ribosome, for tRNA binding and peptide bond formation. It has been suggested to have peptidyltransferase activity; this is somewhat controversial. Makes several contacts with the 16S rRNA in the 70S ribosome. The polypeptide is Large ribosomal subunit protein uL2 (Dictyoglomus turgidum (strain DSM 6724 / Z-1310)).